The following is a 95-amino-acid chain: Acylphosphatase (95 aa).

In terms of domain architecture, Acylphosphatase-like spans 9–95 (RLTAWVHGRV…KGGLTGFVER (87 aa)). Active-site residues include Arg-24 and Asn-42.

Belongs to the acylphosphatase family.

It catalyses the reaction an acyl phosphate + H2O = a carboxylate + phosphate + H(+). The sequence is that of Acylphosphatase (acyP) from Saccharopolyspora erythraea (strain ATCC 11635 / DSM 40517 / JCM 4748 / NBRC 13426 / NCIMB 8594 / NRRL 2338).